A 661-amino-acid polypeptide reads, in one-letter code: MSNIDFKALERAANETRGLSMDAVAKAASGHLGLPLGSAEIGAALFGNSLIYNPKDTRWLNRDYFVLSAGHGSMFLYSWLHLSGYDVSIEDIKNFRQLNSKTPGHPKFHDTPGVEATTGPLGQGIANAVGIASACKMAAGKFNTEQHQIFNQKVVVLVGDGCLQEGISQEAISFAGHHRLDNLIVFYDSNDVTLDAMAIETQSEDAVKRFESVGFEVQLVLEGNNIGSLINAYQNAKHSKSGKPQIIICKTTIAKGIPEVAGTNKGHGEAGVKFIDSARKNLGLPEEKFFVSGETRQYFEQHEKQLEKLYQEWQATFAEWKSANPKLAQLLESAHEKHEAIDIMKQIPEFPTTPIIATRKAGSDVLQPISQYLPLSVSGSADLHGSTLNYIKEGRDFTPACPTGRNIKFGIREHAMGAMMNGIAYHGLFKVSGATFLVFSDYLRPAIRLAALSHLPVVYIFTHDSVGVGEDGPTHQPVETVSGLRMIPNLDVIRPADPEETAAAFSLAYARADGPTLLSLTRQNLPFLPGTAQKKREGTLRGGYIVVSETAPLRMILIATGSEVQHCVEAAKLLGDDIRVVSMPCTELFDRQSNEYKQSVLPSGCRNRIAMEAGVTSFWYKYVGLDGKVIGIDRFGMSAPGNAVMKQLGMTSENLVNISKQ.

Serine 2 bears the N-acetylserine mark. Histidine 31 provides a ligand contact to substrate. Residues histidine 71 and 119 to 121 (GPL) contribute to the thiamine diphosphate site. Mg(2+) is bound at residue aspartate 160. Thiamine diphosphate contacts are provided by glycine 161 and asparagine 190. The Mg(2+) site is built by asparagine 190 and valine 192. Substrate contacts are provided by histidine 267, arginine 359, and serine 386. Histidine 267 contributes to the thiamine diphosphate binding site. Catalysis depends on glutamate 413, which acts as the Proton donor. Phenylalanine 439 serves as a coordination point for thiamine diphosphate. Substrate is bound by residues histidine 463, aspartate 471, and arginine 522.

Belongs to the transketolase family. Homodimer. Requires Mg(2+) as cofactor. The cofactor is Ca(2+). It depends on Mn(2+) as a cofactor. Co(2+) is required as a cofactor. Thiamine diphosphate serves as cofactor.

The catalysed reaction is D-sedoheptulose 7-phosphate + D-glyceraldehyde 3-phosphate = aldehydo-D-ribose 5-phosphate + D-xylulose 5-phosphate. In terms of biological role, catalyzes the transfer of a two-carbon ketol group from a ketose donor to an aldose acceptor, via a covalent intermediate with the cofactor thiamine pyrophosphate. The chain is Transketolase (tkt-1) from Dictyostelium discoideum (Social amoeba).